A 135-amino-acid chain; its full sequence is Large ribosomal subunit protein uL22c (135 aa).

It belongs to the universal ribosomal protein uL22 family. As to quaternary structure, part of the 50S ribosomal subunit.

Its subcellular location is the plastid. Its function is as follows. This protein binds specifically to 23S rRNA. The globular domain of the protein is located near the polypeptide exit tunnel on the outside of the subunit, while an extended beta-hairpin is found that lines the wall of the exit tunnel in the center of the 70S ribosome. The polypeptide is Large ribosomal subunit protein uL22c (rpl22) (Cuscuta exaltata (Tall dodder)).